The primary structure comprises 150 residues: MADNEILQMHDLKPAPGAKKDRTRVGRGEGSKGKTAGRGAKGQTKRNHVRPGFEGGQLPLYMRLPKLRGFKNPFKVEFQVINIARLVELFPEGGEVAVADLIAKGAVRDNAPVKVLGDGETTVAFTLKGVKASASAKSKIEAAGGSVSED.

The interval 1–55 (MADNEILQMHDLKPAPGAKKDRTRVGRGEGSKGKTAGRGAKGQTKRNHVRPGFEG) is disordered. Residues 8–32 (QMHDLKPAPGAKKDRTRVGRGEGSK) show a composition bias toward basic and acidic residues.

It belongs to the universal ribosomal protein uL15 family. Part of the 50S ribosomal subunit.

Its function is as follows. Binds to the 23S rRNA. In Bifidobacterium longum (strain DJO10A), this protein is Large ribosomal subunit protein uL15.